Consider the following 386-residue polypeptide: MSRSWISKRESKILYILLTTTELYLKTGHPVGSKTLKEYEGSNLSTATIRNYFSELEAEGFLKKNHISGGRIPTDLAFRYYVDHCADCSQDELPESTINLLNQLPEESQNIVKDLQKASELLGEALQLPTCFSSPRFDNDSVTNIQLSLVDEQRAVVILSTEFGQIFTDTLWLSEASNPASLKRIEIFLQSYVRKQSPMEILSQKEEDIGMTLYNEVVVRYLTRYCNFSEEDLYQTGLSKLLRYESFKDPDMLALGLSFFENRRHMCKLLDIGMHRDRPTAFIGNELSDIFRTPNPQCAVITIPYYMNRTPLGAFGVLGPVNLPYKEIFKTLTIFADKIKASLTQSFYKFKLSFRRPCPSDPTLSKEPTLLARYSSIKLLPPKETS.

This sequence belongs to the HrcA family.

Its function is as follows. Negative regulator of class I heat shock genes (grpE-dnaK-dnaJ and groELS operons). Prevents heat-shock induction of these operons. The polypeptide is Heat-inducible transcription repressor HrcA (Chlamydia caviae (strain ATCC VR-813 / DSM 19441 / 03DC25 / GPIC) (Chlamydophila caviae)).